The following is a 213-amino-acid chain: Octanoyltransferase (213 aa).

Residues 32–207 (NSTLDEIWLV…NILALLNNPD (176 aa)) form the BPL/LPL catalytic domain. Substrate-binding positions include 71-78 (RGGQVTYH), 138-140 (SLG), and 151-153 (GLA). The Acyl-thioester intermediate role is filled by Cys169.

Belongs to the LipB family.

It localises to the cytoplasm. The enzyme catalyses octanoyl-[ACP] + L-lysyl-[protein] = N(6)-octanoyl-L-lysyl-[protein] + holo-[ACP] + H(+). Its pathway is protein modification; protein lipoylation via endogenous pathway; protein N(6)-(lipoyl)lysine from octanoyl-[acyl-carrier-protein]: step 1/2. In terms of biological role, catalyzes the transfer of endogenously produced octanoic acid from octanoyl-acyl-carrier-protein onto the lipoyl domains of lipoate-dependent enzymes. Lipoyl-ACP can also act as a substrate although octanoyl-ACP is likely to be the physiological substrate. The polypeptide is Octanoyltransferase (Shigella flexneri serotype 5b (strain 8401)).